A 232-amino-acid chain; its full sequence is Thiamine import ATP-binding protein ThiQ (232 aa).

Positions L2–I230 constitute an ABC transporter domain. G32–S39 is an ATP binding site.

This sequence belongs to the ABC transporter superfamily. Thiamine importer (TC 3.A.1.19.1) family. As to quaternary structure, the complex is composed of two ATP-binding proteins (ThiQ), two transmembrane proteins (ThiP) and a solute-binding protein (ThiB).

The protein resides in the cell inner membrane. It catalyses the reaction thiamine(out) + ATP + H2O = thiamine(in) + ADP + phosphate + H(+). Its function is as follows. Part of the ABC transporter complex ThiBPQ involved in thiamine import. Responsible for energy coupling to the transport system. This chain is Thiamine import ATP-binding protein ThiQ, found in Shigella flexneri serotype 5b (strain 8401).